The following is a 503-amino-acid chain: Aromatase (503 aa).

2 consecutive transmembrane segments (helical) span residues 19–39 (EVMP…FFVW) and 51–71 (GYCM…MGLG). The tract at residues 294–324 (ENVNQCILEMMIAAPDTLSVTVFFMLCLIAQ) is substrate-binding pocket. Substrate-binding residues include Asp309 and Met374. Residue Cys437 coordinates heme.

The protein belongs to the cytochrome P450 family. Heme is required as a cofactor. As to expression, expressed in placenta. Highly expressed in follicles (0 hour:hCG), followed by a drop (12-24 hour:hCG) and by an increase (30-39 hour:hCG). Highly expressed in corpora lutea. Also expressed in granulosa cell layer. Not expressed in theca interna.

The protein localises to the endoplasmic reticulum membrane. It is found in the microsome membrane. The enzyme catalyses testosterone + 3 reduced [NADPH--hemoprotein reductase] + 3 O2 = 17beta-estradiol + formate + 3 oxidized [NADPH--hemoprotein reductase] + 4 H2O + 4 H(+). It catalyses the reaction androst-4-ene-3,17-dione + 3 reduced [NADPH--hemoprotein reductase] + 3 O2 = estrone + formate + 3 oxidized [NADPH--hemoprotein reductase] + 4 H2O + 4 H(+). The catalysed reaction is androst-4-ene-3,17-dione + reduced [NADPH--hemoprotein reductase] + O2 = 19-hydroxyandrost-4-ene-3,17-dione + oxidized [NADPH--hemoprotein reductase] + H2O + H(+). It carries out the reaction 19-hydroxyandrost-4-ene-3,17-dione + reduced [NADPH--hemoprotein reductase] + O2 = 19-oxo-androst-4-ene-3,17-dione + oxidized [NADPH--hemoprotein reductase] + 2 H2O + H(+). The enzyme catalyses 19-oxo-androst-4-ene-3,17-dione + reduced [NADPH--hemoprotein reductase] + O2 = estrone + formate + oxidized [NADPH--hemoprotein reductase] + H2O + 2 H(+). It catalyses the reaction estrone + reduced [NADPH--hemoprotein reductase] + O2 = 2-hydroxyestrone + oxidized [NADPH--hemoprotein reductase] + H2O + H(+). The catalysed reaction is 17beta-hydroxy-5alpha-androstan-3-one + reduced [NADPH--hemoprotein reductase] + O2 = 17beta,19-dihydroxy-3-oxo-5alpha-androstanone + oxidized [NADPH--hemoprotein reductase] + H2O + H(+). It carries out the reaction 17beta,19-dihydroxy-3-oxo-5alpha-androstanone + reduced [NADPH--hemoprotein reductase] + O2 = 17beta-hydroxy-3,19-dioxo-5alpha-androstanone + oxidized [NADPH--hemoprotein reductase] + 2 H2O + H(+). The enzyme catalyses 17beta-hydroxy-3,19-dioxo-5alpha-androstanone + reduced [NADPH--hemoprotein reductase] + O2 = 17beta-hydroxy-3-oxo-19-nor-5alpha-androst-1-ene + formate + oxidized [NADPH--hemoprotein reductase] + H2O + 2 H(+). It functions in the pathway steroid hormone biosynthesis. Its function is as follows. A cytochrome P450 monooxygenase that catalyzes the conversion of C19 androgens, androst-4-ene-3,17-dione (androstenedione) and testosterone to the C18 estrogens, estrone and estradiol, respectively. Catalyzes three successive oxidations of C19 androgens: two conventional oxidations at C19 yielding 19-hydroxy and 19-oxo/19-aldehyde derivatives, followed by a third oxidative aromatization step that involves C1-beta hydrogen abstraction combined with cleavage of the C10-C19 bond to yield a phenolic A ring and formic acid. Alternatively, the third oxidative reaction yields a 19-norsteroid and formic acid. Converts dihydrotestosterone to delta1,10-dehydro 19-nordihydrotestosterone and may play a role in homeostasis of this potent androgen. Also displays 2-hydroxylase activity toward estrone. Mechanistically, uses molecular oxygen inserting one oxygen atom into a substrate, and reducing the second into a water molecule, with two electrons provided by NADPH via cytochrome P450 reductase (CPR; NADPH-ferrihemoprotein reductase). This chain is Aromatase (CYP19A1), found in Equus caballus (Horse).